The sequence spans 556 residues: 2-succinyl-5-enolpyruvyl-6-hydroxy-3-cyclohexene-1-carboxylate synthase (556 aa).

It belongs to the TPP enzyme family. MenD subfamily. As to quaternary structure, homodimer. Mg(2+) is required as a cofactor. Mn(2+) serves as cofactor. Requires thiamine diphosphate as cofactor.

The catalysed reaction is isochorismate + 2-oxoglutarate + H(+) = 5-enolpyruvoyl-6-hydroxy-2-succinyl-cyclohex-3-ene-1-carboxylate + CO2. Its pathway is quinol/quinone metabolism; 1,4-dihydroxy-2-naphthoate biosynthesis; 1,4-dihydroxy-2-naphthoate from chorismate: step 2/7. It participates in quinol/quinone metabolism; menaquinone biosynthesis. In terms of biological role, catalyzes the thiamine diphosphate-dependent decarboxylation of 2-oxoglutarate and the subsequent addition of the resulting succinic semialdehyde-thiamine pyrophosphate anion to isochorismate to yield 2-succinyl-5-enolpyruvyl-6-hydroxy-3-cyclohexene-1-carboxylate (SEPHCHC). The protein is 2-succinyl-5-enolpyruvyl-6-hydroxy-3-cyclohexene-1-carboxylate synthase of Salmonella gallinarum (strain 287/91 / NCTC 13346).